Here is a 563-residue protein sequence, read N- to C-terminus: Putative solute carrier family 26 member 10P (563 aa).

Helical transmembrane passes span alanine 45–isoleucine 65, leucine 75–valine 91, valine 116–leucine 136, alanine 152–leucine 172, and leucine 352–phenylalanine 372. Positions arginine 406–alanine 541 constitute an STAS domain.

The protein belongs to the SLC26A/SulP transporter (TC 2.A.53) family.

It is found in the membrane. Functionally, chloride/bicarbonate exchanger. In Homo sapiens (Human), this protein is Putative solute carrier family 26 member 10P (SLC26A10P).